Consider the following 586-residue polypeptide: Pyruvate kinase (586 aa).

Arginine 32 provides a ligand contact to substrate. Residues asparagine 34, serine 36, aspartate 66, and threonine 67 each contribute to the K(+) site. 34-37 is a binding site for ATP; the sequence is NFSH. 2 residues coordinate ATP: arginine 73 and lysine 156. A Mg(2+)-binding site is contributed by glutamate 222. Substrate is bound by residues glycine 245, aspartate 246, and threonine 278. Aspartate 246 contacts Mg(2+).

It belongs to the pyruvate kinase family. In the C-terminal section; belongs to the PEP-utilizing enzyme family. Requires Mg(2+) as cofactor. K(+) is required as a cofactor.

It catalyses the reaction pyruvate + ATP = phosphoenolpyruvate + ADP + H(+). Its pathway is carbohydrate degradation; glycolysis; pyruvate from D-glyceraldehyde 3-phosphate: step 5/5. The sequence is that of Pyruvate kinase (pyk) from Staphylococcus saprophyticus subsp. saprophyticus (strain ATCC 15305 / DSM 20229 / NCIMB 8711 / NCTC 7292 / S-41).